An 822-amino-acid polypeptide reads, in one-letter code: Telomere length regulation protein TEL2 homolog (822 aa).

Positions 442–504 (NDDEEEQPDA…ADQEKKKSAP (63 aa)) are disordered. Residues 465 to 477 (VSSQSVASDPGNG) are compositionally biased toward polar residues. Over residues 480–489 (SELDSDDDLT) the composition is skewed to acidic residues.

It belongs to the TEL2 family.

It localises to the cytoplasm. The protein localises to the membrane. Its subcellular location is the nucleus. In terms of biological role, regulator of the DNA damage response (DDR). Part of the TTT complex that is required to stabilize protein levels of the phosphatidylinositol 3-kinase-related protein kinase (PIKK) family proteins. Promotes assembly, stabilizes and maintains the activity of TORC complexes, which regulate cell growth and survival in response to nutrient and hormonal signals. May be involved in telomere length regulation. This Danio rerio (Zebrafish) protein is Telomere length regulation protein TEL2 homolog (telo2).